We begin with the raw amino-acid sequence, 445 residues long: MDIRQVTETIAMIEEQNFDIRTITMGISLLDCIDTDIDWAAEKIYKKITTKAKDLVAVGDEIAAELGIPIVNKRVSVTPISLIGAATDSRDYVPLAKALDKAAKEIGVDFIGGFSALVQKGYQKGDEILINSIPRALAETDKVCSSVNIGSTKTGINMTAVADMGRIIKETAQLSDMGAAKLVVFANAVEDNPFMAGAFHGVGEADVVINVGVSGPGVVKRALEKVRGESFDVVAETVKKTAFKITRIGQLVGQMASECLGVKFGIVDLSLAPTPAVGDSVARVLEEMGLETVGTHGTTAALALLNDQVKKGGVMACNQVGGLSGAFIPVSEDEGMIAAVQNGSLNLEKLEAMTAICSVGLDMIAIPEATPAETIAAMIADEAAIGVINQKTTAVRIIPKGKEGDMIEFGELLGTAPVMKVNQASSAAFIARGGQIPAPIHSFKN.

The protein belongs to the UPF0210 family. As to quaternary structure, homodimer.

This is UPF0210 protein SSA_2018 from Streptococcus sanguinis (strain SK36).